Reading from the N-terminus, the 337-residue chain is Formamidase (337 aa).

The region spanning 14–257 (VVIGLVQLQL…DEIITAEVRP (244 aa)) is the CN hydrolase domain. The Proton acceptor role is filled by Glu-60. The Proton donor role is filled by Lys-129. Cys-162 acts as the Nucleophile in catalysis.

This sequence belongs to the carbon-nitrogen hydrolase superfamily. Aliphatic amidase family.

The enzyme catalyses formamide + H2O = formate + NH4(+). Is an aliphatic amidase with a restricted substrate specificity, as it only hydrolyzes formamide. In Bradyrhizobium sp. (strain ORS 278), this protein is Formamidase.